The sequence spans 1172 residues: DNA-directed RNA polymerase subunit beta (1172 aa).

The protein belongs to the RNA polymerase beta chain family. The RNAP catalytic core consists of 2 alpha, 1 beta, 1 beta' and 1 omega subunit. When a sigma factor is associated with the core the holoenzyme is formed, which can initiate transcription.

It carries out the reaction RNA(n) + a ribonucleoside 5'-triphosphate = RNA(n+1) + diphosphate. In terms of biological role, DNA-dependent RNA polymerase catalyzes the transcription of DNA into RNA using the four ribonucleoside triphosphates as substrates. This is DNA-directed RNA polymerase subunit beta from Mycobacterium sp. (strain KMS).